Reading from the N-terminus, the 702-residue chain is Dynein axonemal intermediate chain 1 (702 aa).

A disordered region spans residues 1–58 (MLPASSKMPHKQPPPPRKQSISMGRGARKRDEDSGTEVGEGTDEWVQSKATVKPPDQL). Ser134 and Ser137 each carry phosphoserine. 5 WD repeats span residues 383–423 (SSES…SQPS), 432–475 (KHTD…LVHT), 540–580 (AHNM…PMFI), 582–622 (DLNS…YEAI), and 630–669 (KKKN…RKMP).

This sequence belongs to the dynein intermediate chain family. As to quaternary structure, consists of at least two heavy chains and a number of intermediate and light chains. Interacts with BICD2. Interacts with CFAP45 and CFAP52. Interacts with CFAP53.

The protein resides in the cytoplasm. It is found in the cytoskeleton. The protein localises to the cilium axoneme. In terms of biological role, part of the dynein complex of respiratory cilia. This chain is Dynein axonemal intermediate chain 1 (DNAI1), found in Bos taurus (Bovine).